We begin with the raw amino-acid sequence, 119 residues long: MVKLAFPRELRLLTPNHFTFVFQQPQWAGTPHVTILGRLNTLGHPRVGLTVAKKHVKRAHERNRIKRLTRESFRLHQHALPTMDFVVIAKKGVADLDNHTLTEALEKLWRRHCRQSQSC.

This sequence belongs to the RnpA family. Consists of a catalytic RNA component (M1 or rnpB) and a protein subunit.

The catalysed reaction is Endonucleolytic cleavage of RNA, removing 5'-extranucleotides from tRNA precursor.. RNaseP catalyzes the removal of the 5'-leader sequence from pre-tRNA to produce the mature 5'-terminus. It can also cleave other RNA substrates such as 4.5S RNA. The protein component plays an auxiliary but essential role in vivo by binding to the 5'-leader sequence and broadening the substrate specificity of the ribozyme. The protein is Ribonuclease P protein component of Sodalis glossinidius (strain morsitans).